Here is a 318-residue protein sequence, read N- to C-terminus: Fe(3+) dicitrate transport system permease protein FecD (318 aa).

The Cytoplasmic segment spans residues 1–2 (MK). The helical transmembrane segment at 3–23 (IALVIFITLALAGCALLSLHM) threads the bilayer. Over 24–55 (GVIPVPWRALLTDWQAGHEHYYVLMEYRLPRL) the chain is Periplasmic. Residues 56–76 (LLALFVGAALAVAGVLIQGIV) traverse the membrane as a helical segment. Over 77–105 (RNPLASPDILGVNHAASLASVGALLLMPS) the chain is Cytoplasmic. The helical transmembrane segment at 106 to 126 (LPVMVLPLLAFAGGMAGLILL) threads the bilayer. At 127 to 137 (KMLAKTHQPMK) the chain is on the periplasmic side. A helical transmembrane segment spans residues 138 to 158 (LALTGVALSACWASLTDYLML). At 159-179 (SRPQDVNNALLWLTGSLWGRD) the chain is on the cytoplasmic side. A helical transmembrane segment spans residues 180–200 (WSFVKIAIPLMILFLPLSLSF). The Periplasmic segment spans residues 201-225 (CRDLDLLALGDARATTLGVSVPHTR). Residues 226-246 (FWALLLAVAMTSTGVAACGPI) form a helical membrane-spanning segment. Over 247–269 (SFIGLVVPHMMRSITGGRHRRLL) the chain is Cytoplasmic. The chain crosses the membrane as a helical span at residues 270 to 290 (PVSALTGALLLVVADLLARII). Topologically, residues 291–294 (HPPL) are periplasmic. A helical transmembrane segment spans residues 295–315 (ELPVGVLTAIIGAPWFVWLLV). Residues 316 to 318 (RMR) are Cytoplasmic-facing.

It belongs to the binding-protein-dependent transport system permease family. FecCD subfamily. As to quaternary structure, the complex is composed of two ATP-binding proteins (FecE), two transmembrane proteins (FecC and FecD) and a solute-binding protein (FecB). Interacts with FecB.

The protein localises to the cell inner membrane. Part of the ABC transporter complex FecBCDE involved in citrate-dependent Fe(3+) uptake. Probably responsible for the translocation of the substrate across the membrane. The polypeptide is Fe(3+) dicitrate transport system permease protein FecD (Escherichia coli (strain K12)).